We begin with the raw amino-acid sequence, 270 residues long: Ribonuclease HII (270 aa).

Residues 84–270 form the RNase H type-2 domain; it reads RYIAGVDEVG…HRNSFLTKLL (187 aa). A divalent metal cation-binding residues include aspartate 90, glutamate 91, and aspartate 186.

The protein belongs to the RNase HII family. Mn(2+) is required as a cofactor. Mg(2+) serves as cofactor.

It is found in the cytoplasm. It catalyses the reaction Endonucleolytic cleavage to 5'-phosphomonoester.. In terms of biological role, endonuclease that specifically degrades the RNA of RNA-DNA hybrids. The chain is Ribonuclease HII from Clostridium beijerinckii (strain ATCC 51743 / NCIMB 8052) (Clostridium acetobutylicum).